The primary structure comprises 837 residues: GRIP1-associated protein 1 (837 aa).

Ala2 carries the N-acetylalanine modification. Residues 4–158 (ALSEEEFQRM…ALQERYGKEA (155 aa)) are a coiled coil. Disordered regions lie at residues 161–180 (PSAVSEGQGDPPGDVLPISL), 555–577 (KGKEEELQNVRDQLQQAQEERDG), 647–666 (SEMNSPSRTQTGDSSSVSSF), and 677–702 (SSAIPARSLSSSPQAQPPRPAELSDE). Positions 204–637 (EQLQGLESSK…LQEILTNSKS (434 aa)) form a coiled coil. A compositionally biased stretch (polar residues) spans 648–666 (EMNSPSRTQTGDSSSVSSF). Ser651, Ser662, Ser664, Ser665, Ser684, Ser686, Ser687, and Ser688 each carry phosphoserine. Low complexity predominate over residues 678–690 (SAIPARSLSSSPQ). Coiled-coil stretches lie at residues 697–731 (AELSDEEVAELFQRLAETQQEKWMLEEKVKHLEVS) and 781–810 (DENLREMNKKLQNMLEEQLTKNMHLHKDME). Ser826 is modified (phosphoserine).

Interacts with GRIP1, GRIP2 and AMPA receptors. Interacts (via C-terminus) with MAPK8/JNK1 and with MAP3K1/MEKK1; the interaction promotes MAP3K1-mediated phosphorylation of MAPK8. Interacts (via N-terminus) with RAB4A (in GTP-bound form). Interacts (via C-terminus) with STX12. Post-translationally, proteolytically cleaved by caspase-3. A minor C-terminal proteolytic fragment of 30 kDa is produced. Proteolytic cleavage is required for JNK signaling activation. Expressed in the central nervous system; especially in neurons.

It localises to the early endosome membrane. The protein resides in the recycling endosome membrane. The protein localises to the cell projection. Its subcellular location is the axon. It is found in the dendrite. It localises to the synapse. Functionally, regulates the endosomal recycling back to the neuronal plasma membrane, possibly by connecting early and late recycling endosomal domains and promoting segregation of recycling endosomes from early endosomal membranes. Involved in the localization of recycling endosomes to dendritic spines, thereby playing a role in the maintenance of dendritic spine morphology. Required for the activity-induced AMPA receptor recycling to dendrite membranes and for long-term potentiation and synaptic plasticity. In terms of biological role, functions as a scaffold protein in neurons to facilitate MAP3K1/MEKK1-mediated activation of the JNK1 kinase by phosphorylation, possibly by bringing MAP3K1/MEKK1 and JNK1 in close proximity. This is GRIP1-associated protein 1 (Gripap1) from Rattus norvegicus (Rat).